Here is a 602-residue protein sequence, read N- to C-terminus: Zinc finger MYND domain-containing protein 11 (602 aa).

Positions 6-82 (KRRQADTKAI…CKGSKAGIEQ (77 aa)) constitute an SAMD1-like winged helix (WH) domain. The segment at 100 to 148 (DWYCFECHLPGEVLICDLCFRVYHSKCLSDEFRLRDSSSHWQCPVCRSI) adopts a PHD-type zinc-finger fold. The Bromo domain maps to 149–255 (KKKHSNKQEM…KDTCHELDEL (107 aa)). Zn(2+) contacts are provided by Cys-258, Cys-261, Cys-277, and His-281. One can recognise a PWWP domain in the interval 280–331 (NHELVWAKMKGFGFWPAKVMQKEDNQVDVRFFGHHHQRAWIPSENIQDITVN). The aromatic cage required for H3.3K36me3-specific binding stretch occupies residues 291-310 (FGFWPAKVMQKEDNQVDVRF). Lys-366 participates in a covalent cross-link: Glycyl lysine isopeptide (Lys-Gly) (interchain with G-Cter in SUMO2). Residues 366-461 (KNEDRGEEEA…HRSTQTTSDG (96 aa)) are disordered. Positions 394 to 400 (RAKKGRR) match the Nuclear localization signal motif. Glycyl lysine isopeptide (Lys-Gly) (interchain with G-Cter in SUMO2) cross-links involve residues Lys-407 and Lys-408. Phosphoserine is present on Ser-421. Residues 435–461 (SVSTQTKKLSASSPRMLHRSTQTTSDG) show a composition bias toward polar residues. Residues Cys-563, Cys-566, Cys-574, Cys-575, Cys-581, Cys-585, His-594, and Cys-598 each coordinate Zn(2+). The MYND-type zinc finger occupies 563–598 (CYNCEEEAMYHCCWNTSYCSIKCQQEHWHAEHKRTC).

As to quaternary structure, homooligomer; forms homooligomers via its C-terminus. Interacts with histone H3.3 trimethylated at 'Lys-36' (H3.3K36me3). Interacts (via MYND-type zinc finger) with NCOR1. Interacts (via MYND-type zinc finger) with MGA protein (via PXLXP motif). Interacts (via MYND-type zinc finger) with EZH2. Interacts with EMSY and E2F6. Interacts with PIAS1 and UBE2I. Ubiquitinated, leading to proteasomal degradation. Post-translationally, sumoylated following its interaction with PIAS1 and UBE2I.

It is found in the nucleus. It localises to the chromosome. In terms of biological role, chromatin reader that specifically recognizes and binds histone H3.3 trimethylated at 'Lys-36' (H3.3K36me3) and regulates RNA polymerase II elongation. Does not bind other histone H3 subtypes (H3.1 or H3.2). Colocalizes with highly expressed genes and functions as a transcription corepressor by modulating RNA polymerase II at the elongation stage. Binds non-specifically to dsDNA. Acts as a tumor-suppressor by repressing a transcriptional program essential for tumor cell growth. This is Zinc finger MYND domain-containing protein 11 (Zmynd11) from Mus musculus (Mouse).